Here is a 497-residue protein sequence, read N- to C-terminus: Tyrosine-protein kinase SPK-1 (497 aa).

The segment at 1–25 (MGQKFSIKCKKQSKNKNTSKCQKIP) is disordered. The SH3 domain maps to 33–94 (PGSYMVKAKY…PSNYVSKQDG (62 aa)). One can recognise an SH2 domain in the interval 100–200 (EAWREIQRWE…NTHIPLTDPM (101 aa)). One can recognise a Protein kinase domain in the interval 220-482 (IEILNEIGRG…LVLQEKMDLL (263 aa)). ATP is bound by residues 226–234 (IGRGFFGSV) and lysine 248. Aspartate 342 serves as the catalytic Proton acceptor.

Belongs to the protein kinase superfamily. Tyr protein kinase family.

It catalyses the reaction L-tyrosyl-[protein] + ATP = O-phospho-L-tyrosyl-[protein] + ADP + H(+). The chain is Tyrosine-protein kinase SPK-1 from Girardia tigrina (Planarian).